We begin with the raw amino-acid sequence, 236 residues long: DNA repair protein RecO (236 aa).

Belongs to the RecO family.

Functionally, involved in DNA repair and RecF pathway recombination. The protein is DNA repair protein RecO of Photobacterium profundum (strain SS9).